Here is a 702-residue protein sequence, read N- to C-terminus: Polyribonucleotide nucleotidyltransferase (702 aa).

Mg(2+) is bound by residues D485 and D491. In terms of domain architecture, KH spans 552-612 (PRTEIICIDP…EGVKKAISII (61 aa)). The 69-residue stretch at 622 to 690 (GEIYLGKVTK…NQGRINLSRK (69 aa)) folds into the S1 motif domain.

Belongs to the polyribonucleotide nucleotidyltransferase family. Mg(2+) is required as a cofactor.

The protein localises to the cytoplasm. The catalysed reaction is RNA(n+1) + phosphate = RNA(n) + a ribonucleoside 5'-diphosphate. In terms of biological role, involved in mRNA degradation. Catalyzes the phosphorolysis of single-stranded polyribonucleotides processively in the 3'- to 5'-direction. This chain is Polyribonucleotide nucleotidyltransferase, found in Clostridium botulinum (strain Loch Maree / Type A3).